Here is a 600-residue protein sequence, read N- to C-terminus: Pyranose dehydrogenase 3 (600 aa).

A signal peptide spans 1–25; the sequence is MLPRVARLNTHLVSLALLGFQITYG. Asparagine 99 and asparagine 114 each carry an N-linked (GlcNAc...) asparagine glycan. Tele-8alpha-FAD histidine is present on histidine 127. 6 N-linked (GlcNAc...) asparagine glycosylation sites follow: asparagine 173, asparagine 199, asparagine 275, asparagine 342, asparagine 399, and asparagine 507. The Proton acceptor role is filled by histidine 535. The N-linked (GlcNAc...) asparagine glycan is linked to asparagine 546. The active site involves histidine 579.

This sequence belongs to the GMC oxidoreductase family. As to quaternary structure, monomer. FAD serves as cofactor. In terms of processing, N-glycosylated.

It is found in the secreted. It carries out the reaction pyranose + acceptor = pyranos-2-ulose + reduced acceptor.. It catalyses the reaction pyranose + acceptor = pyranos-3-ulose + reduced acceptor.. The catalysed reaction is pyranose + acceptor = pyranos-2,3-diulose + reduced acceptor.. The enzyme catalyses a pyranoside + acceptor = a pyranosid-3-ulose + reduced acceptor.. It carries out the reaction a pyranoside + acceptor = a pyranosid-3,4-diulose + reduced acceptor.. Functionally, catalyzes the single-oxidation or sequential double oxidation reaction of carbohydrates primarily at carbon-2 and/or carbon-3 with the concomitant reduction of the flavin. The enzyme exhibits a broad sugar substrate specificity, oxidizing different aldopyranoses to the corresponding C-1, C-2, C-3 or C-1,2, C-2,3 and C-3,4 (di)dehydro sugars with substrate-specific regioselectivity. Accepts only a narrow range of electron acceptors such as substituted benzoquinones and complexed metal ions and reacts extremely slowly with O(2) as acceptor. May play a role in the natural recycling of plant matter by oxidizing all major monosaccharides in lignocellulose and by reducing quinone compounds or reactive radical species generated during lignin depolymerization. The sequence is that of Pyranose dehydrogenase 3 from Leucoagaricus meleagris (Western flat-topped agaric).